We begin with the raw amino-acid sequence, 580 residues long: Myb-like protein C (580 aa).

Disordered stretches follow at residues 1-58, 73-101, 121-203, and 354-380; these read MTMI…YGSN, QYSI…TLLS, NVYN…SSTN, and SDND…NPPN. 3 stretches are compositionally biased toward low complexity: residues 20 to 47, 87 to 101, and 126 to 203; these read NNNN…NNNN, NSTM…TLLS, and PHQS…SSTN. Over residues 361-371 the composition is skewed to basic residues; the sequence is KKKRERIRKSV. HTH myb-type domains follow at residues 368–430 and 431–482; these read RKSV…CPAI and RKGS…SREV. 2 DNA-binding regions (H-T-H motif) span residues 402–426 and 454–478; these read WKKI…KRVL and WKNV…KSCM. The Myb-like domain maps to 484–546; the sequence is WSSREDEILQ…ECKTRYFQLN (63 aa).

Its subcellular location is the nucleus. Transcription activator required for the culmination, at the time of the fruiting body formation. Regulates genes involved in the cell differentiation within the fruiting body. The chain is Myb-like protein C (mybC) from Dictyostelium discoideum (Social amoeba).